Reading from the N-terminus, the 544-residue chain is MAANQPVVVLPENVKRFMGRDAQRMNILAGRIIGETVRSTLGPKGMDKMLVDDLGDIVVTNDGVTILKEMSVEHPAAKMLIEVAKTQEKEVGDGTTTAVVIAGELLRKAEELLDQNVHPTIVIKGYQLAVQKAQEVLKEIAMDVKADDKEILHKIAMTSITGKGAEKAKEKLGEMIVEAVTAVVDESGKVDKDLIKIEKKEGASVDETELINGVLIDKERVSPQMPKKIENAKIALLNCPIEVKETETDAEIRITDPTKLMEFIEQEEKMLKDMVDTIKASGANVLFCQKGIDDLAQHYLAKEGILAVRRVKKSDMEKLSKATGANVVTNIKDLKAEDLGEAGIVEERKIAGDAMIFVEECKHPKAVTMLIRGTTEHVIEEVARAVDDAIGVVACTIEDGKIVAGGGAAEIELAMKLRDYAEGVSGREQLAVRAFADALEVVPRTLAENAGLDAIEMLVKLRAKHAEGNNAYYGLNVFTGDVENMTENGVVEPLRVKTQAIQSATEATEMLLRIDDVIAAEKLSGGSGGDMGDMGGMGGMGGMM.

The protein belongs to the TCP-1 chaperonin family. Forms an oligomeric complex of eight-membered rings.

Functionally, molecular chaperone; binds unfolded polypeptides in vitro, and has a weak ATPase activity. This Methanothermococcus thermolithotrophicus (Methanococcus thermolithotrophicus) protein is Thermosome subunit (ths).